We begin with the raw amino-acid sequence, 279 residues long: 3-methyl-2-oxobutanoate hydroxymethyltransferase (279 aa).

Asp-49 and Asp-88 together coordinate Mg(2+). 3-methyl-2-oxobutanoate contacts are provided by residues 49–50 (DS), Asp-88, and Lys-118. Residue Glu-120 participates in Mg(2+) binding. Glu-187 serves as the catalytic Proton acceptor.

The protein belongs to the PanB family. In terms of assembly, homodecamer; pentamer of dimers. Mg(2+) is required as a cofactor.

The protein localises to the cytoplasm. It carries out the reaction 3-methyl-2-oxobutanoate + (6R)-5,10-methylene-5,6,7,8-tetrahydrofolate + H2O = 2-dehydropantoate + (6S)-5,6,7,8-tetrahydrofolate. It functions in the pathway cofactor biosynthesis; (R)-pantothenate biosynthesis; (R)-pantoate from 3-methyl-2-oxobutanoate: step 1/2. Catalyzes the reversible reaction in which hydroxymethyl group from 5,10-methylenetetrahydrofolate is transferred onto alpha-ketoisovalerate to form ketopantoate. This chain is 3-methyl-2-oxobutanoate hydroxymethyltransferase, found in Agrobacterium fabrum (strain C58 / ATCC 33970) (Agrobacterium tumefaciens (strain C58)).